A 423-amino-acid chain; its full sequence is UDP-N-acetylglucosamine 1-carboxyvinyltransferase 1 (423 aa).

23–24 (KN) is a binding site for phosphoenolpyruvate. Residue Arg-96 participates in UDP-N-acetyl-alpha-D-glucosamine binding. Cys-120 (proton donor) is an active-site residue. Position 120 is a 2-(S-cysteinyl)pyruvic acid O-phosphothioketal (Cys-120). The UDP-N-acetyl-alpha-D-glucosamine site is built by Asp-309 and Val-331.

Belongs to the EPSP synthase family. MurA subfamily.

Its subcellular location is the cytoplasm. It carries out the reaction phosphoenolpyruvate + UDP-N-acetyl-alpha-D-glucosamine = UDP-N-acetyl-3-O-(1-carboxyvinyl)-alpha-D-glucosamine + phosphate. It functions in the pathway cell wall biogenesis; peptidoglycan biosynthesis. In terms of biological role, cell wall formation. Adds enolpyruvyl to UDP-N-acetylglucosamine. This Streptococcus pyogenes serotype M3 (strain ATCC BAA-595 / MGAS315) protein is UDP-N-acetylglucosamine 1-carboxyvinyltransferase 1.